A 443-amino-acid chain; its full sequence is ATP-dependent protease ATPase subunit HslU (443 aa).

ATP is bound by residues I18 and 60 to 65 (GVGKTE). A disordered region spans residues 141–165 (DQWGQNEENDTDSSTRQSFRKKLRE). Residues D256, E321, and R393 each coordinate ATP.

Belongs to the ClpX chaperone family. HslU subfamily. In terms of assembly, a double ring-shaped homohexamer of HslV is capped on each side by a ring-shaped HslU homohexamer. The assembly of the HslU/HslV complex is dependent on binding of ATP.

Its subcellular location is the cytoplasm. ATPase subunit of a proteasome-like degradation complex; this subunit has chaperone activity. The binding of ATP and its subsequent hydrolysis by HslU are essential for unfolding of protein substrates subsequently hydrolyzed by HslV. HslU recognizes the N-terminal part of its protein substrates and unfolds these before they are guided to HslV for hydrolysis. The polypeptide is ATP-dependent protease ATPase subunit HslU (Photobacterium profundum (strain SS9)).